Here is a 357-residue protein sequence, read N- to C-terminus: Holliday junction branch migration complex subunit RuvB (357 aa).

The interval 1–27 is disordered; it reads MGRFDDAGAQDAEPDDRDVSPALTVGE. The segment at 1–195 is large ATPase domain (RuvB-L); the sequence is MGRFDDAGAQ…FGFTAHMDFY (195 aa). ATP-binding positions include leucine 34, arginine 35, glycine 76, lysine 79, threonine 80, serine 81, 142–144, arginine 185, tyrosine 195, and arginine 232; that span reads EDF. Residue threonine 80 coordinates Mg(2+). Positions 196–266 are small ATPAse domain (RuvB-S); the sequence is EPAELERVLA…IAKAALEVYD (71 aa). The interval 269–357 is head domain (RuvB-H); sequence ELGLDRLDRA…TGLGQTGLFD (89 aa). Residues arginine 324 and arginine 329 each contribute to the DNA site.

The protein belongs to the RuvB family. As to quaternary structure, homohexamer. Forms an RuvA(8)-RuvB(12)-Holliday junction (HJ) complex. HJ DNA is sandwiched between 2 RuvA tetramers; dsDNA enters through RuvA and exits via RuvB. An RuvB hexamer assembles on each DNA strand where it exits the tetramer. Each RuvB hexamer is contacted by two RuvA subunits (via domain III) on 2 adjacent RuvB subunits; this complex drives branch migration. In the full resolvosome a probable DNA-RuvA(4)-RuvB(12)-RuvC(2) complex forms which resolves the HJ.

It is found in the cytoplasm. It carries out the reaction ATP + H2O = ADP + phosphate + H(+). Its function is as follows. The RuvA-RuvB-RuvC complex processes Holliday junction (HJ) DNA during genetic recombination and DNA repair, while the RuvA-RuvB complex plays an important role in the rescue of blocked DNA replication forks via replication fork reversal (RFR). RuvA specifically binds to HJ cruciform DNA, conferring on it an open structure. The RuvB hexamer acts as an ATP-dependent pump, pulling dsDNA into and through the RuvAB complex. RuvB forms 2 homohexamers on either side of HJ DNA bound by 1 or 2 RuvA tetramers; 4 subunits per hexamer contact DNA at a time. Coordinated motions by a converter formed by DNA-disengaged RuvB subunits stimulates ATP hydrolysis and nucleotide exchange. Immobilization of the converter enables RuvB to convert the ATP-contained energy into a lever motion, pulling 2 nucleotides of DNA out of the RuvA tetramer per ATP hydrolyzed, thus driving DNA branch migration. The RuvB motors rotate together with the DNA substrate, which together with the progressing nucleotide cycle form the mechanistic basis for DNA recombination by continuous HJ branch migration. Branch migration allows RuvC to scan DNA until it finds its consensus sequence, where it cleaves and resolves cruciform DNA. In Mycobacterium sp. (strain JLS), this protein is Holliday junction branch migration complex subunit RuvB.